The chain runs to 417 residues: Serine hydroxymethyltransferase (417 aa).

(6S)-5,6,7,8-tetrahydrofolate-binding positions include L121 and 125–127 (GHL). K229 bears the N6-(pyridoxal phosphate)lysine mark. 355–357 (SPF) is a binding site for (6S)-5,6,7,8-tetrahydrofolate.

This sequence belongs to the SHMT family. Homodimer. It depends on pyridoxal 5'-phosphate as a cofactor.

The protein resides in the cytoplasm. It carries out the reaction (6R)-5,10-methylene-5,6,7,8-tetrahydrofolate + glycine + H2O = (6S)-5,6,7,8-tetrahydrofolate + L-serine. Its pathway is one-carbon metabolism; tetrahydrofolate interconversion. It participates in amino-acid biosynthesis; glycine biosynthesis; glycine from L-serine: step 1/1. In terms of biological role, catalyzes the reversible interconversion of serine and glycine with tetrahydrofolate (THF) serving as the one-carbon carrier. This reaction serves as the major source of one-carbon groups required for the biosynthesis of purines, thymidylate, methionine, and other important biomolecules. Also exhibits THF-independent aldolase activity toward beta-hydroxyamino acids, producing glycine and aldehydes, via a retro-aldol mechanism. This is Serine hydroxymethyltransferase from Shewanella sp. (strain W3-18-1).